The sequence spans 297 residues: 1D-myo-inositol 2-acetamido-2-deoxy-alpha-D-glucopyranoside deacetylase (297 aa).

Zn(2+)-binding residues include His-11, Asp-14, and His-154.

This sequence belongs to the MshB deacetylase family. It depends on Zn(2+) as a cofactor.

The catalysed reaction is 1D-myo-inositol 2-acetamido-2-deoxy-alpha-D-glucopyranoside + H2O = 1D-myo-inositol 2-amino-2-deoxy-alpha-D-glucopyranoside + acetate. Functionally, catalyzes the deacetylation of 1D-myo-inositol 2-acetamido-2-deoxy-alpha-D-glucopyranoside (GlcNAc-Ins) in the mycothiol biosynthesis pathway. This is 1D-myo-inositol 2-acetamido-2-deoxy-alpha-D-glucopyranoside deacetylase from Tsukamurella paurometabola (strain ATCC 8368 / DSM 20162 / CCUG 35730 / CIP 100753 / JCM 10117 / KCTC 9821 / NBRC 16120 / NCIMB 702349 / NCTC 13040) (Corynebacterium paurometabolum).